The sequence spans 150 residues: MALDQSFVGRSYPPTDPYEVGREKIREFAEAVGDPNPVYTDPEAAKALGYADVIAPPTFVFAITFKAAGQVVQDPQLGLDYSRVVHGDQKFAYTRPVRAGDRLTVTSTIESIKSLAGNDVVDVRGEVHDEAGEHVVTAITKLVARAAEEG.

Residues 8-126 (VGRSYPPTDP…GNDVVDVRGE (119 aa)) enclose the MaoC-like domain.

It belongs to the UPF0336 family.

This Streptomyces avermitilis (strain ATCC 31267 / DSM 46492 / JCM 5070 / NBRC 14893 / NCIMB 12804 / NRRL 8165 / MA-4680) protein is UPF0336 protein SAV_4901.